We begin with the raw amino-acid sequence, 362 residues long: 3-dehydroquinate synthase (362 aa).

Residues 72 to 77 (SGEEAK), 106 to 110 (GVTGD), 130 to 131 (TT), lysine 142, and lysine 151 contribute to the NAD(+) site. Residues glutamate 184, histidine 246, and histidine 263 each coordinate Zn(2+).

Belongs to the sugar phosphate cyclases superfamily. Dehydroquinate synthase family. Requires Co(2+) as cofactor. Zn(2+) is required as a cofactor. It depends on NAD(+) as a cofactor.

It is found in the cytoplasm. It catalyses the reaction 7-phospho-2-dehydro-3-deoxy-D-arabino-heptonate = 3-dehydroquinate + phosphate. The protein operates within metabolic intermediate biosynthesis; chorismate biosynthesis; chorismate from D-erythrose 4-phosphate and phosphoenolpyruvate: step 2/7. Functionally, catalyzes the conversion of 3-deoxy-D-arabino-heptulosonate 7-phosphate (DAHP) to dehydroquinate (DHQ). The sequence is that of 3-dehydroquinate synthase from Bacillus velezensis (strain DSM 23117 / BGSC 10A6 / LMG 26770 / FZB42) (Bacillus amyloliquefaciens subsp. plantarum).